Here is a 410-residue protein sequence, read N- to C-terminus: S-adenosylmethionine synthase (410 aa).

Residue H15 coordinates ATP. D17 provides a ligand contact to Mg(2+). A K(+)-binding site is contributed by E43. E56 and Q100 together coordinate L-methionine. The flexible loop stretch occupies residues Q100–T110. Residues D171–K173, K248–F249, D257, R263–K264, A280, and K284 contribute to the ATP site. Position 257 (D257) interacts with L-methionine. Residue K288 participates in L-methionine binding.

The protein belongs to the AdoMet synthase family. In terms of assembly, homotetramer; dimer of dimers. Mg(2+) serves as cofactor. Requires K(+) as cofactor.

It is found in the cytoplasm. The enzyme catalyses L-methionine + ATP + H2O = S-adenosyl-L-methionine + phosphate + diphosphate. Its pathway is amino-acid biosynthesis; S-adenosyl-L-methionine biosynthesis; S-adenosyl-L-methionine from L-methionine: step 1/1. In terms of biological role, catalyzes the formation of S-adenosylmethionine (AdoMet) from methionine and ATP. The overall synthetic reaction is composed of two sequential steps, AdoMet formation and the subsequent tripolyphosphate hydrolysis which occurs prior to release of AdoMet from the enzyme. The sequence is that of S-adenosylmethionine synthase from Prochlorococcus marinus (strain MIT 9211).